Consider the following 95-residue polypeptide: Co-chaperonin GroES (95 aa).

It belongs to the GroES chaperonin family. Heptamer of 7 subunits arranged in a ring. Interacts with the chaperonin GroEL.

The protein localises to the cytoplasm. Together with the chaperonin GroEL, plays an essential role in assisting protein folding. The GroEL-GroES system forms a nano-cage that allows encapsulation of the non-native substrate proteins and provides a physical environment optimized to promote and accelerate protein folding. GroES binds to the apical surface of the GroEL ring, thereby capping the opening of the GroEL channel. The polypeptide is Co-chaperonin GroES (Francisella tularensis subsp. holarctica (strain FTNF002-00 / FTA)).